We begin with the raw amino-acid sequence, 706 residues long: Cyclic nucleotide-gated ion channel 18 (706 aa).

Topologically, residues 1–53 (MNKIRSLRCLLPETITSASTAASNRGSDGSQFSVLWRHQILDPDSNIVTYWNH) are cytoplasmic. A helical transmembrane segment spans residues 54-74 (VFLITSILALFLDPFYFYVPY). The Extracellular portion of the chain corresponds to 75–86 (VGGPACLSIDIS). A helical transmembrane segment spans residues 87 to 107 (LAATVTFFRTVADIFHLLHIF). The Cytoplasmic portion of the chain corresponds to 108-142 (MKFRTAFVARSSRVFGRGELVMDSREIAMRYLKTD). Residues 143-163 (FLIDVAAMLPLPQLVIWLVIP) traverse the membrane as a helical segment. Over 164 to 174 (AATNGTANHAN) the chain is Extracellular. Residues 175–195 (STLALIVLVQYIPRSFIIFPL) form a helical membrane-spanning segment. Residues 196 to 217 (NQRIIKTTGFIAKTAWAGAAYN) lie on the Cytoplasmic side of the membrane. The chain crosses the membrane as a helical span at residues 218–238 (LLLYILASHVLGAMWYLSSIG). At 239–345 (RQFSCWSNVC…ITTSVYLGET (107 aa)) the chain is on the extracellular side. A helical membrane pass occupies residues 346 to 366 (LFCITICIFGLILFTLLIGNM). Topologically, residues 367-706 (QSSLQSMSVR…PDFSIDKEDV (340 aa)) are cytoplasmic. A nucleoside 3',5'-cyclic phosphate-binding positions include 449-579 (FFSQ…AFRY) and E520. The tract at residues 565 to 580 (FKRLQSKKLQHAFRYY) is calmodulin-binding. The IQ domain occupies 585-614 (RAWGACFVQSAWRRYKRRKLAKELSLHESS). Residues 661–706 (ANTRRGTNQKASSSSTGKKDGSSTSLKMPQLFKPDEPDFSIDKEDV) are disordered. The span at 693–706 (KPDEPDFSIDKEDV) shows a compositional bias: basic and acidic residues.

The protein belongs to the cyclic nucleotide-gated cation channel (TC 1.A.1.5) family. In terms of assembly, homomultimer. Interacts with CPK32. Expressed in pollen grains. Not detected in leaves, roots or root hairs.

Its subcellular location is the cell membrane. It localises to the cytoplasmic vesicle membrane. Cyclic nucleotide-gated ion channel required for directional pollen tube growth into the transmitting tract. Acts as a Ca(2+)-permeable divalent cation-selective channel inhibited by either lanthanum or gadolinium. Regulated by CPK32 to mediate Ca(2+) transport across the plasma membrane in response to Ca(2+) oscillation. The chain is Cyclic nucleotide-gated ion channel 18 from Arabidopsis thaliana (Mouse-ear cress).